Here is a 366-residue protein sequence, read N- to C-terminus: Quinolinate synthase (366 aa).

Residues histidine 44 and serine 61 each contribute to the iminosuccinate site. Cysteine 108 provides a ligand contact to [4Fe-4S] cluster. Residues 139 to 141 and serine 160 contribute to the iminosuccinate site; that span reads YIN. Residue cysteine 228 participates in [4Fe-4S] cluster binding. Iminosuccinate is bound by residues 254 to 256 and threonine 271; that span reads HPE. Cysteine 318 contributes to the [4Fe-4S] cluster binding site.

The protein belongs to the quinolinate synthase family. Type 3 subfamily. It depends on [4Fe-4S] cluster as a cofactor.

The protein localises to the cytoplasm. The enzyme catalyses iminosuccinate + dihydroxyacetone phosphate = quinolinate + phosphate + 2 H2O + H(+). Its pathway is cofactor biosynthesis; NAD(+) biosynthesis; quinolinate from iminoaspartate: step 1/1. Catalyzes the condensation of iminoaspartate with dihydroxyacetone phosphate to form quinolinate. This chain is Quinolinate synthase, found in Listeria monocytogenes serotype 4b (strain F2365).